We begin with the raw amino-acid sequence, 416 residues long: MVSSLPKESQAELQLFQNEINAANPSDFLQFSANYFNKRLEQQRAFLKAREPEFKAKNIVLFPEPEESFSRPQSAQSQSRSRSSVMFKSPFVNEDPHSNVFKSGFNLDPHEQDTHQQAQEEQQHTREKTSTPPLPMHFNAQRRTSVSGETLQPNNFDDWTPDHYKEKSEQQLQRLEKSIRNNFLFNKLDSDSKRLVINCLEEKSVPKGATIIKQGDQGDYFYVVEKGTVDFYVNDNKVNSSGPGSSFGELALMYNSPRAATVVATSDCLLWALDRLTFRKILLGSSFKKRLMYDDLLKSMPVLKSLTTYDRAKLADALDTKIYQPGETIIREGDQGENFYLIEYGAVDVSKKGQGVINKLKDHDYFGEVALLNDLPRQATVTATKRTKVATLGKSGFQRLLGPAVDVLKLNDPTRH.

The tract at residues 2-183 (VSSLPKESQA…RLEKSIRNNF (182 aa)) is dimerization and phosphorylation. A phosphoserine mark is found at Ser-3, Ser-4, Ser-9, Ser-68, Ser-70, Ser-74, Ser-77, Ser-79, Ser-81, Ser-83, and Ser-84. Residues 8–45 (ESQAELQLFQNEINAANPSDFLQFSANYFNKRLEQQRA) form a dimerization/docking domain (D/D) region. The disordered stretch occupies residues 65-138 (PEESFSRPQS…TSTPPLPMHF (74 aa)). The segment covering 70 to 84 (SRPQSAQSQSRSRSS) has biased composition (low complexity). Residue Thr-129 is modified to Phosphothreonine. Ser-130 bears the Phosphoserine mark. Residues Thr-131 and Thr-144 each carry the phosphothreonine modification. The short motif at 142 to 146 (RRTSV) is the Inhibitor sequence (IS) element. A Phosphoserine; by autocatalysis modification is found at Ser-145. Phosphoserine is present on Ser-147. A phosphothreonine mark is found at Thr-150 and Thr-160. 3',5'-cyclic AMP is bound by residues 184–301 (LFNK…KSMP), Glu-249, Arg-258, 302–416 (VLKS…PTRH), Glu-368, and Arg-377.

It belongs to the cAMP-dependent kinase regulatory chain family. In terms of assembly, the inactive holoenzyme of cAMP-dependent protein kinase is a tetramer, composed of 2 regulatory subunits (R, encoded by BCY1) and two catalytic subunits (C, encoded by the 3 partially redundant TPK1, TPK2, and TPK3 genes). Activation by cAMP causes dissociation of the holoenzyme, producing 2 active catalytic monomers C and a regulatory dimer R(2). In terms of processing, phosphorylated by YAK1 in response to glucose starvation. Phosphorylated by MCK1 at Thr-129 upon TOR complex 1 (TORC1) inhibition. Thr-129 phosphorylation activates BCY1 to inhibit PKA. TORC1 inhibits phosphorylation of RxxS/T sites but has no effect on Ser-145 phosphorylation. The phosphorylation sites can be clustered in several groups, all localized in the N-terminal part. The first cluster termed cluster I (CI) is located close to the N-terminus and includes Ser-3, Ser-4 and Ser-9. The second includes Ser-68, Ser-70, Ser-74, Ser-77, Ser-79, Ser-81, Ser-83, and Ser-84. This cluster of phosphorylation sites, termed cluster II (CII), is important for BCY1 cytoplasmic localization and function. The third cluster of phosphorylated residues consists of Thr-144, Ser-145, Ser-147, Thr-150, and Thr-160. This cluster falls within or near the so-called autoinhibitory domain where the catalytic subunit of PKA autophosphorylates the highly conserved Ser-145 to inhibit BCY1. A last cluster of phosphorylated residues included Thr-129, Ser-130, and Thr-131 and is termed cluster III (CIII). Sites in CIII (and to a lesser extent in CII) are hyperphosphorylated in response to rapamycin.

The protein resides in the cytoplasm. The protein localises to the nucleus. In terms of biological role, regulatory subunit of the cyclic AMP-dependent protein kinase (PKA), an effector of the Ras/cAMP pathway. Inhibits PKA activity in the absence of cAMP. cAMP activates PKA and promotes growth and proliferation in response to good nutrient conditions. Together with ZDS1, provides a negative feedback control on the cell wall integrity-signaling pathway by acting as a negative regulator of MAP kinase SLT2/MPK1. In Saccharomyces cerevisiae (strain ATCC 204508 / S288c) (Baker's yeast), this protein is cAMP-dependent protein kinase regulatory subunit (BCY1).